We begin with the raw amino-acid sequence, 111 residues long: uncharacterized protein (111 aa).

Residues 1 to 26 (MDLKDGVEEEEGAGENGKGGTHAQRV) form a disordered region.

This is an uncharacterized protein from Caenorhabditis elegans.